We begin with the raw amino-acid sequence, 89 residues long: Small ribosomal subunit protein uS15 (89 aa).

Belongs to the universal ribosomal protein uS15 family. As to quaternary structure, part of the 30S ribosomal subunit. Forms a bridge to the 50S subunit in the 70S ribosome, contacting the 23S rRNA.

Its function is as follows. One of the primary rRNA binding proteins, it binds directly to 16S rRNA where it helps nucleate assembly of the platform of the 30S subunit by binding and bridging several RNA helices of the 16S rRNA. Functionally, forms an intersubunit bridge (bridge B4) with the 23S rRNA of the 50S subunit in the ribosome. This chain is Small ribosomal subunit protein uS15, found in Corynebacterium diphtheriae (strain ATCC 700971 / NCTC 13129 / Biotype gravis).